A 478-amino-acid polypeptide reads, in one-letter code: Ankyrin repeat and BTB/POZ domain-containing protein 1 (478 aa).

ANK repeat units lie at residues 1 to 31 (MDTS…EVNV) and 35 to 64 (WDST…RCEA). 2 consecutive BTB domains span residues 115-182 (SDVV…DIGV) and 272-346 (PDIC…ELPP). Positions 450-478 (TVQTYSAIEEAQQQLRALENLLVSIGLDC) form a coiled coil.

It localises to the cytoplasm. May act as a mediator of the PTEN growth-suppressive signaling pathway. May play a role in developmental processes. The chain is Ankyrin repeat and BTB/POZ domain-containing protein 1 from Rattus norvegicus (Rat).